The primary structure comprises 145 residues: Arginine repressor (145 aa).

This sequence belongs to the ArgR family.

It is found in the cytoplasm. Its pathway is amino-acid biosynthesis; L-arginine biosynthesis [regulation]. Functionally, regulates arginine biosynthesis genes. The chain is Arginine repressor from Streptococcus pyogenes serotype M6 (strain ATCC BAA-946 / MGAS10394).